Consider the following 599-residue polypeptide: UvrABC system protein C (599 aa).

In terms of domain architecture, GIY-YIG spans 15–93 (DNPGVYQYYD…IKTLQPRYNI (79 aa)). The UVR domain maps to 207–242 (KDSMKDFKKVMTNLAQNMHFEEAQKIKEKIEILENY).

It belongs to the UvrC family. In terms of assembly, interacts with UvrB in an incision complex.

The protein resides in the cytoplasm. The UvrABC repair system catalyzes the recognition and processing of DNA lesions. UvrC both incises the 5' and 3' sides of the lesion. The N-terminal half is responsible for the 3' incision and the C-terminal half is responsible for the 5' incision. The chain is UvrABC system protein C from Flavobacterium psychrophilum (strain ATCC 49511 / DSM 21280 / CIP 103535 / JIP02/86).